Consider the following 122-residue polypeptide: Small ribosomal subunit protein bS16 (122 aa).

The segment at 85-122 is disordered; that stretch reads REAKNNPIKAKPGKRAQERAAEKAQKAADAAAAADAAE. The span at 99–110 shows a compositional bias: basic and acidic residues; the sequence is RAQERAAEKAQK. A compositionally biased stretch (low complexity) spans 111–122; sequence AADAAAAADAAE.

Belongs to the bacterial ribosomal protein bS16 family.

In Rhizobium etli (strain ATCC 51251 / DSM 11541 / JCM 21823 / NBRC 15573 / CFN 42), this protein is Small ribosomal subunit protein bS16.